Reading from the N-terminus, the 250-residue chain is Deoxynucleoside-5'-monophosphate kinase (250 aa).

ATP contacts are provided by Gly-14, Asp-16, and Thr-17. 10 residues coordinate dGMP: Val-44, Lys-65, Arg-130, Gly-137, Thr-138, Trp-150, Asp-170, Arg-172, Glu-176, and Ser-210.

Belongs to the dNMP kinase family. As to quaternary structure, monomer.

The catalysed reaction is a 2'-deoxyribonucleoside 5'-phosphate + ATP = a 2'-deoxyribonucleoside 5'-diphosphate + ADP. Functionally, allows the synthesis of deoxyribonucleoside triphosphates necessary for the rapid viral DNA replication. Phosphorylates all four dNMPs. The enzyme had the highest activity with dAMP and had about 30% less activity with dTMP and dGMP, respectively. The lowest activity was observed with dCMP as the substrate (about 35% of that with dAMP). The polypeptide is Deoxynucleoside-5'-monophosphate kinase (Escherichia coli (Enterobacteria phage T5)).